The chain runs to 199 residues: Sulfocyanin (199 aa).

The chain crosses the membrane as a helical; Signal-anchor for type II membrane protein span at residues 7–27; the sequence is VLPVVVGILVVIIAVAVGVYV. Positions 79 to 188 constitute a Plastocyanin-like domain; that stretch reads NFNGTSSGSL…SGMWAVLVAS (110 aa). H110, C171, H176, and M181 together coordinate Cu cation.

It belongs to the multicopper oxidase family.

It is found in the cell membrane. In terms of biological role, the 4 redox proteins SoxE, SoxF, SoxG and SoxH probably form part of a membrane respiratory complex together with SoxM, a catalytic subunit of cytochrome oxidase. The chain is Sulfocyanin (soxE) from Sulfolobus acidocaldarius (strain ATCC 33909 / DSM 639 / JCM 8929 / NBRC 15157 / NCIMB 11770).